A 225-amino-acid chain; its full sequence is tRNA (guanine-N(1)-)-methyltransferase (225 aa).

Residues G112 and 132–137 (IGDYVL) each bind S-adenosyl-L-methionine.

It belongs to the RNA methyltransferase TrmD family. In terms of assembly, homodimer.

The protein localises to the cytoplasm. It carries out the reaction guanosine(37) in tRNA + S-adenosyl-L-methionine = N(1)-methylguanosine(37) in tRNA + S-adenosyl-L-homocysteine + H(+). Its function is as follows. Specifically methylates guanosine-37 in various tRNAs. This Flavobacterium psychrophilum (strain ATCC 49511 / DSM 21280 / CIP 103535 / JIP02/86) protein is tRNA (guanine-N(1)-)-methyltransferase.